The chain runs to 159 residues: Protein-export protein SecB (159 aa).

It belongs to the SecB family. In terms of assembly, homotetramer, a dimer of dimers. One homotetramer interacts with 1 SecA dimer.

It localises to the cytoplasm. Functionally, one of the proteins required for the normal export of preproteins out of the cell cytoplasm. It is a molecular chaperone that binds to a subset of precursor proteins, maintaining them in a translocation-competent state. It also specifically binds to its receptor SecA. This chain is Protein-export protein SecB, found in Burkholderia vietnamiensis (strain G4 / LMG 22486) (Burkholderia cepacia (strain R1808)).